The following is a 432-amino-acid chain: RING finger protein 44 (432 aa).

Positions 1 to 86 (MRPWALAVTR…GGSPRMLHPA (86 aa)) are disordered. The segment covering 56–65 (QQPPSRPPHL) has biased composition (pro residues). The RING-type; atypical zinc finger occupies 380–421 (CVVCFSDFEARQLLRVLPCNHEFHTKCVDKWLKANRTCPICR).

The chain is RING finger protein 44 (RNF44) from Homo sapiens (Human).